The following is a 440-amino-acid chain: Replication factor C large subunit (440 aa).

Residue 48 to 55 coordinates ATP; it reads GPPGVGKT.

This sequence belongs to the activator 1 small subunits family. RfcL subfamily. As to quaternary structure, heteromultimer composed of small subunits (RfcS) and large subunits (RfcL).

In terms of biological role, part of the RFC clamp loader complex which loads the PCNA sliding clamp onto DNA. This is Replication factor C large subunit from Sulfurisphaera tokodaii (strain DSM 16993 / JCM 10545 / NBRC 100140 / 7) (Sulfolobus tokodaii).